A 304-amino-acid chain; its full sequence is UDP-N-acetylenolpyruvoylglucosamine reductase (304 aa).

The FAD-binding PCMH-type domain occupies 33–198 (KVGGPVDILL…LRATFNLVNG (166 aa)). Arg-177 is a catalytic residue. Ser-227 acts as the Proton donor in catalysis. Residue Glu-297 is part of the active site.

This sequence belongs to the MurB family. FAD is required as a cofactor.

It is found in the cytoplasm. The catalysed reaction is UDP-N-acetyl-alpha-D-muramate + NADP(+) = UDP-N-acetyl-3-O-(1-carboxyvinyl)-alpha-D-glucosamine + NADPH + H(+). It functions in the pathway cell wall biogenesis; peptidoglycan biosynthesis. Its function is as follows. Cell wall formation. In Clostridium beijerinckii (strain ATCC 51743 / NCIMB 8052) (Clostridium acetobutylicum), this protein is UDP-N-acetylenolpyruvoylglucosamine reductase.